Here is a 368-residue protein sequence, read N- to C-terminus: Aspartate-semialdehyde dehydrogenase (368 aa).

Residues 10–13, 37–38, and Q72 each bind NADP(+); these read RGMV and TS. R101 lines the phosphate pocket. C134 acts as the Acyl-thioester intermediate in catalysis. Residues 160-161 and P191 each bind NADP(+); that span reads SG. E239 lines the substrate pocket. K242 lines the phosphate pocket. R266 provides a ligand contact to substrate. Catalysis depends on H273, which acts as the Proton acceptor. Residue Q349 participates in NADP(+) binding.

This sequence belongs to the aspartate-semialdehyde dehydrogenase family. As to quaternary structure, homodimer.

The catalysed reaction is L-aspartate 4-semialdehyde + phosphate + NADP(+) = 4-phospho-L-aspartate + NADPH + H(+). It functions in the pathway amino-acid biosynthesis; L-lysine biosynthesis via DAP pathway; (S)-tetrahydrodipicolinate from L-aspartate: step 2/4. The protein operates within amino-acid biosynthesis; L-methionine biosynthesis via de novo pathway; L-homoserine from L-aspartate: step 2/3. It participates in amino-acid biosynthesis; L-threonine biosynthesis; L-threonine from L-aspartate: step 2/5. In terms of biological role, catalyzes the NADPH-dependent formation of L-aspartate-semialdehyde (L-ASA) by the reductive dephosphorylation of L-aspartyl-4-phosphate. The sequence is that of Aspartate-semialdehyde dehydrogenase from Azotobacter vinelandii.